Consider the following 204-residue polypeptide: MGAPLAVALGALHYLALFLQLGGATRPAGHAPWDNHVSGHALFTETPHDMTARTGEDVEMACSFRGSGSPSYSLEIQWWYVRSHRDWTDKQAWASNQLKASQQEDAGKEATKISVVKVVGSNISHKLRLSRVKPTDEGTYECRVIDFSDGKARHHKVKAYLRVQPGENSVLHLPEAPPAAPAPPPPKPGKELRKRSVDQEACSL.

A signal peptide spans 1–24 (MGAPLAVALGALHYLALFLQLGGA). The region spanning 41–158 (ALFTETPHDM…DGKARHHKVK (118 aa)) is the Ig-like domain. Cys-62 and Cys-142 are oxidised to a cystine. Residues 168–204 (NSVLHLPEAPPAAPAPPPPKPGKELRKRSVDQEACSL) form a disordered region. A compositionally biased stretch (pro residues) spans 175-187 (EAPPAAPAPPPPK). The segment covering 188–198 (PGKELRKRSVD) has biased composition (basic and acidic residues).

The polypeptide is V-set and transmembrane domain-containing protein 2-like protein (VSTM2L) (Homo sapiens (Human)).